Reading from the N-terminus, the 1412-residue chain is Ecdysone-induced protein 75B, isoform B (1412 aa).

Over residues 1–14 the composition is skewed to low complexity; it reads MEAVQAAAAATSSG. Disordered stretches follow at residues 1-96, 110-204, 258-298, and 321-448; these read MEAV…PGGT, QRAT…QQHV, QYQQ…VPPP, and HFQQ…SIPD. Over residues 15–25 the composition is skewed to gly residues; it reads GSSGSVPGSGS. Basic and acidic residues predominate over residues 32-57; sequence IKTEPIDFEMLHLEENERQQDIEREP. The span at 58–68 shows a compositional bias: low complexity; sequence SSSNSNSNSNS. The span at 69–81 shows a compositional bias: polar residues; the sequence is LTPQRYTHVQVQT. Low complexity predominate over residues 87–96; that stretch reads PTGLTTPGGT. Residues 124-133 show a composition bias toward polar residues; that stretch reads YSQQQGTAAS. Over residues 135–150 the composition is skewed to low complexity; sequence SAPPETTALLTTTSGT. Over residues 151–164 the composition is skewed to polar residues; it reads PQIIITRTLPSNQH. Low complexity predominate over residues 177-203; that stretch reads HHYQQQQPQRQQSPPPLHHQQQQQQQH. Over residues 266–284 the composition is skewed to pro residues; it reads PLAPPPPPPPPPPPPPPPQ. 3 stretches are compositionally biased toward low complexity: residues 323–371, 378–403, and 417–447; these read QQQQ…SSHI, SSSSSSNMHHQQQQQQQQSSLGNSVM, and ASSSSSGNSSSSNTNNSSSSSNGEEPSSSIP. The segment at residues 455-531 is a DNA-binding region (nuclear receptor); the sequence is TVLCRVCGDK…VGMSRDAVRF (77 aa). NR C4-type zinc fingers lie at residues 458 to 478 and 495 to 514; these read CRVCGDKASGFHYGVHSCEGC and CTKNQQCSILRINRNRCQYC. The region spanning 565–813 is the NR LBD domain; it reads DQPRLLAAVL…QQMWSMEDGN (249 aa). 6 disordered regions span residues 837–878, 984–1021, 1044–1064, 1108–1174, 1204–1317, and 1368–1401; these read KSPL…SALA, LDSPTDSGIESGNEKNECKAVSSGGSSSCSSPRSSVDD, VSVSPVRSPQPSTSSHLKRQI, AEAD…SSHS, ENST…SNSA, and VTVTASNGGPPSAAASPAPSSSPPASVGSPNPGL. 5 stretches are compositionally biased toward low complexity: residues 854–866, 1005–1017, 1044–1058, 1110–1155, and 1163–1174; these read GSPSSSQPQGVSL, SSGGSSSCSSPRS, VSVSPVRSPQPSTSS, ADAS…AQSQ, and SSPKASMASSHS. 2 stretches are compositionally biased toward polar residues: residues 1206–1219 and 1231–1253; these read STAASSTTNGVGNR and AVQNQQRWGSSSVITTTCQQRQQ. 3 stretches are compositionally biased toward low complexity: residues 1254–1290, 1299–1317, and 1372–1400; these read SVSPHSNGSSSSSSSSSSSSSSSSSTSSNCSSSSASS, STSNGTSAPASSSSGSNSA, and ASNGGPPSAAASPAPSSSPPASVGSPNPG.

This sequence belongs to the nuclear hormone receptor family. NR1 subfamily.

Its subcellular location is the nucleus. Functionally, implicated in the regulation of ecdysone-triggered gene hierarchies. Probably plays a key role in mediating the regulation of the larval molt by 20-OH-ecdysone. This Drosophila melanogaster (Fruit fly) protein is Ecdysone-induced protein 75B, isoform B (Eip75B).